Reading from the N-terminus, the 445-residue chain is Arabinooligosaccharide-binding protein (445 aa).

The signal sequence occupies residues 1–20 (MGKNILFFSFVGVMVLVLVA). Residue cysteine 21 is the site of N-palmitoyl cysteine attachment. Cysteine 21 is lipidated: S-diacylglycerol cysteine.

Belongs to the bacterial solute-binding protein 1 family. In terms of assembly, the complex is composed of two ATP-binding proteins (MsmX), two transmembrane proteins (AraP and AraQ) and a solute-binding protein (AraN).

The protein resides in the cell membrane. Functionally, part of the ABC transporter complex AraNPQ involved in the uptake of arabinooligosaccharides. AraN captures the substrate and delivers it to the two transmembrane components. In Halalkalibacterium halodurans (strain ATCC BAA-125 / DSM 18197 / FERM 7344 / JCM 9153 / C-125) (Bacillus halodurans), this protein is Arabinooligosaccharide-binding protein (araN).